The following is a 228-amino-acid chain: Flagellar L-ring protein (228 aa).

A signal peptide spans 1 to 17 (MHYLRYFAIAFLLLLSS). Residue C18 is the site of N-palmitoyl cysteine attachment. A lipid anchor (S-diacylglycerol cysteine) is attached at C18.

The protein belongs to the FlgH family. The basal body constitutes a major portion of the flagellar organelle and consists of four rings (L,P,S, and M) mounted on a central rod.

The protein localises to the cell membrane. It localises to the bacterial flagellum basal body. Assembles around the rod to form the L-ring and probably protects the motor/basal body from shearing forces during rotation. The protein is Flagellar L-ring protein of Wigglesworthia glossinidia brevipalpis.